We begin with the raw amino-acid sequence, 334 residues long: Retinol dehydrogenase 14 (334 aa).

An NADP(+)-binding site is contributed by 51 to 57 (GANSGLG). Serine 190 serves as a coordination point for substrate. Tyrosine 215 functions as the Proton acceptor in the catalytic mechanism.

This sequence belongs to the short-chain dehydrogenases/reductases (SDR) family.

It carries out the reaction all-trans-retinol + NADP(+) = all-trans-retinal + NADPH + H(+). The enzyme catalyses 11-cis-retinol + NADP(+) = 11-cis-retinal + NADPH + H(+). It catalyses the reaction 9-cis-retinol + NADP(+) = 9-cis-retinal + NADPH + H(+). Retinol dehydrogenase with a clear preference for NADP. Displays high activity towards 9-cis, 11-cis and all-trans-retinol. Shows a very weak activity towards 13-cis-retinol. Has no activity towards steroids. The polypeptide is Retinol dehydrogenase 14 (Rdh14) (Mus musculus (Mouse)).